Consider the following 467-residue polypeptide: Ribulose bisphosphate carboxylase large chain (467 aa).

K5 carries the post-translational modification N6,N6,N6-trimethyllysine. Substrate-binding residues include N114 and T164. Residue K166 is the Proton acceptor of the active site. A substrate-binding site is contributed by K168. Mg(2+) contacts are provided by K192, D194, and E195. K192 carries the N6-carboxylysine modification. H285 functions as the Proton acceptor in the catalytic mechanism. The substrate site is built by R286, H318, and S370.

The protein belongs to the RuBisCO large chain family. Type I subfamily. In terms of assembly, heterohexadecamer of 8 large chains and 8 small chains; disulfide-linked. The disulfide link is formed within the large subunit homodimers. Requires Mg(2+) as cofactor. The disulfide bond which can form in the large chain dimeric partners within the hexadecamer appears to be associated with oxidative stress and protein turnover.

The protein localises to the plastid. The protein resides in the chloroplast. The enzyme catalyses 2 (2R)-3-phosphoglycerate + 2 H(+) = D-ribulose 1,5-bisphosphate + CO2 + H2O. The catalysed reaction is D-ribulose 1,5-bisphosphate + O2 = 2-phosphoglycolate + (2R)-3-phosphoglycerate + 2 H(+). RuBisCO catalyzes two reactions: the carboxylation of D-ribulose 1,5-bisphosphate, the primary event in carbon dioxide fixation, as well as the oxidative fragmentation of the pentose substrate in the photorespiration process. Both reactions occur simultaneously and in competition at the same active site. This chain is Ribulose bisphosphate carboxylase large chain, found in Scutellaria bolanderi (Sierra skullcap).